We begin with the raw amino-acid sequence, 366 residues long: Chorismate synthase (366 aa).

Residues arginine 48 and arginine 54 each coordinate NADP(+). FMN-binding positions include 125–127 (RSS), 238–239 (NA), glycine 278, 293–297 (KPTSS), and arginine 319.

It belongs to the chorismate synthase family. Homotetramer. Requires FMNH2 as cofactor.

It catalyses the reaction 5-O-(1-carboxyvinyl)-3-phosphoshikimate = chorismate + phosphate. It functions in the pathway metabolic intermediate biosynthesis; chorismate biosynthesis; chorismate from D-erythrose 4-phosphate and phosphoenolpyruvate: step 7/7. Its function is as follows. Catalyzes the anti-1,4-elimination of the C-3 phosphate and the C-6 proR hydrogen from 5-enolpyruvylshikimate-3-phosphate (EPSP) to yield chorismate, which is the branch point compound that serves as the starting substrate for the three terminal pathways of aromatic amino acid biosynthesis. This reaction introduces a second double bond into the aromatic ring system. The chain is Chorismate synthase from Neisseria gonorrhoeae (strain NCCP11945).